Consider the following 546-residue polypeptide: Chaperonin GroEL (546 aa).

Residues 30 to 33 (TLGP), lysine 51, 87 to 91 (DGTTT), glycine 415, and aspartate 495 contribute to the ATP site.

Belongs to the chaperonin (HSP60) family. Forms a cylinder of 14 subunits composed of two heptameric rings stacked back-to-back. Interacts with the co-chaperonin GroES.

It localises to the cytoplasm. It catalyses the reaction ATP + H2O + a folded polypeptide = ADP + phosphate + an unfolded polypeptide.. Its function is as follows. Together with its co-chaperonin GroES, plays an essential role in assisting protein folding. The GroEL-GroES system forms a nano-cage that allows encapsulation of the non-native substrate proteins and provides a physical environment optimized to promote and accelerate protein folding. In Brucella melitensis biotype 2 (strain ATCC 23457), this protein is Chaperonin GroEL.